Reading from the N-terminus, the 113-residue chain is Hydrogenase maturation factor HypA (113 aa).

A Ni(2+)-binding site is contributed by His-2. 4 residues coordinate Zn(2+): Cys-73, Cys-76, Cys-89, and Cys-92.

It belongs to the HypA/HybF family.

Involved in the maturation of [NiFe] hydrogenases. Required for nickel insertion into the metal center of the hydrogenase. The sequence is that of Hydrogenase maturation factor HypA from Legionella pneumophila subsp. pneumophila (strain Philadelphia 1 / ATCC 33152 / DSM 7513).